Consider the following 416-residue polypeptide: Queuine tRNA-ribosyltransferase accessory subunit 2 (416 aa).

Zn(2+) contacts are provided by cysteine 350, cysteine 352, cysteine 355, and histidine 381.

Belongs to the queuine tRNA-ribosyltransferase family. QTRT2 subfamily. Heterodimer of a catalytic subunit qtrt1 and an accessory subunit qtrt2. Requires Zn(2+) as cofactor.

The protein resides in the cytoplasm. Its subcellular location is the mitochondrion outer membrane. In terms of biological role, non-catalytic subunit of the queuine tRNA-ribosyltransferase (TGT) that catalyzes the base-exchange of a guanine (G) residue with queuine (Q) at position 34 (anticodon wobble position) in tRNAs with GU(N) anticodons (tRNA-Asp, -Asn, -His and -Tyr), resulting in the hypermodified nucleoside queuosine (7-(((4,5-cis-dihydroxy-2-cyclopenten-1-yl)amino)methyl)-7-deazaguanosine). This chain is Queuine tRNA-ribosyltransferase accessory subunit 2, found in Danio rerio (Zebrafish).